Consider the following 985-residue polypeptide: Alanine--tRNA ligase, mitochondrial (985 aa).

The transit peptide at 1-23 (MAASVAAAARRLRRAIRRSPAWR) directs the protein to the mitochondrion. ATP is bound by residues R110, H128, W210, and 240-242 (LWN). Positions 242 and 265 each coordinate L-alanine. Residue G269 coordinates ATP. Positions 632, 636, 749, and 753 each coordinate Zn(2+).

It belongs to the class-II aminoacyl-tRNA synthetase family. As to quaternary structure, monomer. Requires Zn(2+) as cofactor.

Its subcellular location is the mitochondrion. It catalyses the reaction tRNA(Ala) + L-alanine + ATP = L-alanyl-tRNA(Ala) + AMP + diphosphate. The catalysed reaction is (S)-lactate + ATP + H(+) = (S)-lactoyl-AMP + diphosphate. It carries out the reaction (S)-lactoyl-AMP + L-lysyl-[protein] = N(6)-[(S)-lactoyl]-L-lysyl-[protein] + AMP + 2 H(+). Functionally, catalyzes the attachment of alanine to tRNA(Ala) in a two-step reaction: alanine is first activated by ATP to form Ala-AMP and then transferred to the acceptor end of tRNA(Ala). Also edits incorrectly charged tRNA(Ala) via its editing domain. In presence of high levels of lactate, also acts as a protein lactyltransferase that mediates lactylation of lysine residues in target proteins, such as CGAS. Acts as an inhibitor of cGAS/STING signaling by catalyzing lactylation of CGAS, preventing the formation of liquid-like droplets in which CGAS is activated. The sequence is that of Alanine--tRNA ligase, mitochondrial from Homo sapiens (Human).